The sequence spans 304 residues: UDP-N-acetylenolpyruvoylglucosamine reductase (304 aa).

Residues 33–198 enclose the FAD-binding PCMH-type domain; the sequence is IGGPADLLVM…LEVVLALQEG (166 aa). Arg-177 is a catalytic residue. Ser-227 acts as the Proton donor in catalysis. Glu-297 is a catalytic residue.

The protein belongs to the MurB family. FAD is required as a cofactor.

It localises to the cytoplasm. The enzyme catalyses UDP-N-acetyl-alpha-D-muramate + NADP(+) = UDP-N-acetyl-3-O-(1-carboxyvinyl)-alpha-D-glucosamine + NADPH + H(+). It functions in the pathway cell wall biogenesis; peptidoglycan biosynthesis. In terms of biological role, cell wall formation. In Alkaliphilus metalliredigens (strain QYMF), this protein is UDP-N-acetylenolpyruvoylglucosamine reductase.